The sequence spans 293 residues: NAD-dependent protein deacetylase (293 aa).

The Deacetylase sirtuin-type domain occupies 1–284; that stretch reads MTVAITQTGP…QPPDPLHTAT (284 aa). Residues 27–47 and 105–108 contribute to the NAD(+) site; these read GAGC…GGWK and QNVD. His123 serves as the catalytic Proton acceptor. 4 residues coordinate Zn(2+): Cys131, Cys134, Cys182, and Cys185. Residues 222 to 224, 248 to 250, and Cys266 contribute to the NAD(+) site; these read GSS and NFG.

This sequence belongs to the sirtuin family. Class II subfamily. It depends on Zn(2+) as a cofactor.

The protein localises to the cytoplasm. The catalysed reaction is N(6)-acetyl-L-lysyl-[protein] + NAD(+) + H2O = 2''-O-acetyl-ADP-D-ribose + nicotinamide + L-lysyl-[protein]. In terms of biological role, NAD-dependent protein deacetylase which modulates the activities of several enzymes which are inactive in their acetylated form. This chain is NAD-dependent protein deacetylase, found in Xanthomonas campestris pv. campestris (strain 8004).